The primary structure comprises 430 residues: Histidine--tRNA ligase (430 aa).

It belongs to the class-II aminoacyl-tRNA synthetase family. As to quaternary structure, homodimer.

The protein resides in the cytoplasm. The enzyme catalyses tRNA(His) + L-histidine + ATP = L-histidyl-tRNA(His) + AMP + diphosphate + H(+). The sequence is that of Histidine--tRNA ligase from Acinetobacter baumannii (strain AB307-0294).